The primary structure comprises 178 residues: Large ribosomal subunit protein eL20 (178 aa).

The protein belongs to the eukaryotic ribosomal protein eL20 family.

The protein is Large ribosomal subunit protein eL20 (RPL18A) of Oryza sativa subsp. japonica (Rice).